The following is a 245-amino-acid chain: Platelet-derived growth factor subunit B (245 aa).

A signal peptide spans 1–20 (MNRCWALFLSLCCYLRLVSA). A propeptide spans 21–81 (EGDPIPEELY…ELESLSRGRR (61 aa)) (removed in mature form). Residue asparagine 63 is glycosylated (N-linked (GlcNAc...) asparagine). Cystine bridges form between cysteine 101–cysteine 145, cysteine 134–cysteine 182, and cysteine 138–cysteine 184. The propeptide at 195 to 245 (RSPGSSQEQRARTPQTRVTIRTVRVRRPPKGKHQKFKHTHDKKALKETLGA) is removed in mature form. Residues 220–235 (RRPPKGKHQKFKHTHD) show a composition bias toward basic residues. Residues 220-245 (RRPPKGKHQKFKHTHDKKALKETLGA) form a disordered region. A compositionally biased stretch (basic and acidic residues) spans 236 to 245 (KKALKETLGA).

It belongs to the PDGF/VEGF growth factor family. As to quaternary structure, antiparallel homodimer; disulfide-linked. Antiparallel heterodimer with PDGFA; disulfide-linked. The PDGFB homodimer interacts with PDGFRA and PDGFRB homodimers, and with heterodimers formed by PDGFRA and PDGFRB. The heterodimer composed of PDGFA and PDGFB interacts with PDGFRB homodimers, and with heterodimers formed by PDGFRA and PDGFRB. Interacts with XLKD1. Interacts with LRP1. Interacts with SORL1 (via the N-terminal ectodomain). Interacts with CD82; this interaction inhibits PDGFB-mediated signaling pathway.

The protein localises to the secreted. Its function is as follows. Growth factor that plays an essential role in the regulation of embryonic development, cell proliferation, cell migration, survival and chemotaxis. Potent mitogen for cells of mesenchymal origin. Required for normal proliferation and recruitment of pericytes and vascular smooth muscle cells in the central nervous system, skin, lung, heart and placenta. Required for normal blood vessel development, and for normal development of kidney glomeruli. Plays an important role in wound healing. Signaling is modulated by the formation of heterodimers with PDGFA. This is Platelet-derived growth factor subunit B (PDGFB) from Felis catus (Cat).